Consider the following 245-residue polypeptide: Ubiquinone/menaquinone biosynthesis C-methyltransferase UbiE (245 aa).

Residues threonine 71, aspartate 92, and 118-119 (DA) each bind S-adenosyl-L-methionine.

Belongs to the class I-like SAM-binding methyltransferase superfamily. MenG/UbiE family.

The catalysed reaction is a 2-demethylmenaquinol + S-adenosyl-L-methionine = a menaquinol + S-adenosyl-L-homocysteine + H(+). The enzyme catalyses a 2-methoxy-6-(all-trans-polyprenyl)benzene-1,4-diol + S-adenosyl-L-methionine = a 5-methoxy-2-methyl-3-(all-trans-polyprenyl)benzene-1,4-diol + S-adenosyl-L-homocysteine + H(+). The protein operates within quinol/quinone metabolism; menaquinone biosynthesis; menaquinol from 1,4-dihydroxy-2-naphthoate: step 2/2. It functions in the pathway cofactor biosynthesis; ubiquinone biosynthesis. Functionally, methyltransferase required for the conversion of demethylmenaquinol (DMKH2) to menaquinol (MKH2) and the conversion of 2-polyprenyl-6-methoxy-1,4-benzoquinol (DDMQH2) to 2-polyprenyl-3-methyl-6-methoxy-1,4-benzoquinol (DMQH2). This is Ubiquinone/menaquinone biosynthesis C-methyltransferase UbiE from Neisseria gonorrhoeae (strain ATCC 700825 / FA 1090).